The primary structure comprises 478 residues: MKHIVQQIHFIGIGGTGMSGIAEVLLNLGYQVSGSDLVEGAATKRLKELGAVIHIGHDPKNVGTAEAVVISTAVAGNNPEVLAARAAKIPVIQRAVMLGELMRLKQGIAIAGTHGKTTTTSLVASVLAEGDLDPTFVIGGKLNSAGANARLGRGDFIVVEADESDASFLQLFPAMEVVTNIDADHMDTYQHDMARLKQAFVQFIQRMPFYGVAVLCIDDANVRDIIPFVSQPILRYGLSEDADIRASNVRADGTRMHFTVERRTVRRHGNKPGPLNVTLNLPGLHNVRNALAAIGIATELGVGDQAIIKALSEFSGVGRRFQRYGDIPLASGGKFTLIDDYGHHPVEMAATLAAARGAYPDRRLVLAFQPHRFTRTRDCFGEFVQVLKNFDALVLTEVYPAGEAKIPGADGKSLMKAALVDDKTSKALLNSAAVAFASSVAEMPEKLGQVLKDGDVLITMGAGSISALPHTLSEAKHV.

112–118 (GTHGKTT) is a binding site for ATP.

It belongs to the MurCDEF family.

It is found in the cytoplasm. The catalysed reaction is UDP-N-acetyl-alpha-D-muramate + L-alanine + ATP = UDP-N-acetyl-alpha-D-muramoyl-L-alanine + ADP + phosphate + H(+). The protein operates within cell wall biogenesis; peptidoglycan biosynthesis. Its function is as follows. Cell wall formation. The polypeptide is UDP-N-acetylmuramate--L-alanine ligase (Polynucleobacter asymbioticus (strain DSM 18221 / CIP 109841 / QLW-P1DMWA-1) (Polynucleobacter necessarius subsp. asymbioticus)).